Consider the following 249-residue polypeptide: 2,3-bisphosphoglycerate-dependent phosphoglycerate mutase (249 aa).

Substrate is bound by residues 9–16, 22–23, Arg61, 88–91, Lys99, 115–116, and 184–185; these read RHGQSQWN, TG, ERHY, RR, and GN. His10 acts as the Tele-phosphohistidine intermediate in catalysis. The Proton donor/acceptor role is filled by Glu88.

The protein belongs to the phosphoglycerate mutase family. BPG-dependent PGAM subfamily. Homodimer.

The enzyme catalyses (2R)-2-phosphoglycerate = (2R)-3-phosphoglycerate. The protein operates within carbohydrate degradation; glycolysis; pyruvate from D-glyceraldehyde 3-phosphate: step 3/5. Functionally, catalyzes the interconversion of 2-phosphoglycerate and 3-phosphoglycerate. In Stenotrophomonas maltophilia (strain K279a), this protein is 2,3-bisphosphoglycerate-dependent phosphoglycerate mutase.